A 309-amino-acid chain; its full sequence is Protein-L-isoaspartate O-methyltransferase (309 aa).

A disordered region spans residues 1-46; sequence MSGERAKRFPLALEDLKRAPRKSDGRAGERHAAIAAPKAADKPAAV. Positions 14–32 are enriched in basic and acidic residues; the sequence is EDLKRAPRKSDGRAGERHA. Low complexity predominate over residues 33–46; the sequence is AIAAPKAADKPAAV. Ser-156 is a catalytic residue.

The protein belongs to the methyltransferase superfamily. L-isoaspartyl/D-aspartyl protein methyltransferase family.

It localises to the cytoplasm. It carries out the reaction [protein]-L-isoaspartate + S-adenosyl-L-methionine = [protein]-L-isoaspartate alpha-methyl ester + S-adenosyl-L-homocysteine. In terms of biological role, catalyzes the methyl esterification of L-isoaspartyl residues in peptides and proteins that result from spontaneous decomposition of normal L-aspartyl and L-asparaginyl residues. It plays a role in the repair and/or degradation of damaged proteins. This is Protein-L-isoaspartate O-methyltransferase from Burkholderia vietnamiensis (strain G4 / LMG 22486) (Burkholderia cepacia (strain R1808)).